Here is a 146-residue protein sequence, read N- to C-terminus: uncharacterized protein (146 aa).

The region spanning 1–120 is the N-acetyltransferase domain; it reads MTDKFDANDE…TILKWEKNMD (120 aa).

Belongs to the acetyltransferase family.

This is an uncharacterized protein from Streptococcus pyogenes serotype M6 (strain ATCC BAA-946 / MGAS10394).